A 504-amino-acid chain; its full sequence is ATP synthase subunit alpha 2 (504 aa).

Residue 169–176 (GDRQTGKT) participates in ATP binding.

The protein belongs to the ATPase alpha/beta chains family. In terms of assembly, F-type ATPases have 2 components, CF(1) - the catalytic core - and CF(0) - the membrane proton channel. CF(1) has five subunits: alpha(3), beta(3), gamma(1), delta(1), epsilon(1). CF(0) has three main subunits: a(1), b(2) and c(9-12). The alpha and beta chains form an alternating ring which encloses part of the gamma chain. CF(1) is attached to CF(0) by a central stalk formed by the gamma and epsilon chains, while a peripheral stalk is formed by the delta and b chains.

It is found in the cell membrane. It carries out the reaction ATP + H2O + 4 H(+)(in) = ADP + phosphate + 5 H(+)(out). Functionally, produces ATP from ADP in the presence of a proton gradient across the membrane. The alpha chain is a regulatory subunit. The chain is ATP synthase subunit alpha 2 from Listeria welshimeri serovar 6b (strain ATCC 35897 / DSM 20650 / CCUG 15529 / CIP 8149 / NCTC 11857 / SLCC 5334 / V8).